A 520-amino-acid polypeptide reads, in one-letter code: Transactivator/viroplasmin protein (520 aa).

Residues 486–520 (VQDASADSGPKDGPPPTRSIVEKEDVPTTSSKQVD) form a disordered region.

This sequence belongs to the caulimoviridae viroplasmin family.

It localises to the host cytoplasm. Its function is as follows. Enhances the ribosomal termination-reinitiation event leading to the translation of major open reading frames on the polycistronic viral RNAs. This Cauliflower mosaic virus (strain NY8153) (CaMV) protein is Transactivator/viroplasmin protein.